The primary structure comprises 161 residues: Ribonuclease P protein component 2 (161 aa).

This sequence belongs to the eukaryotic/archaeal RNase P protein component 2 family. In terms of assembly, consists of a catalytic RNA component and at least 4-5 protein subunits.

It localises to the cytoplasm. The enzyme catalyses Endonucleolytic cleavage of RNA, removing 5'-extranucleotides from tRNA precursor.. Functionally, part of ribonuclease P, a protein complex that generates mature tRNA molecules by cleaving their 5'-ends. The polypeptide is Ribonuclease P protein component 2 (Haloarcula marismortui (strain ATCC 43049 / DSM 3752 / JCM 8966 / VKM B-1809) (Halobacterium marismortui)).